Consider the following 427-residue polypeptide: Histidinol dehydrogenase (427 aa).

Substrate contacts are provided by Ser-232, Gln-254, and His-257. 2 residues coordinate Zn(2+): Gln-254 and His-257. Catalysis depends on proton acceptor residues Glu-322 and His-323. His-323, Asp-356, Glu-410, and His-415 together coordinate substrate. Asp-356 lines the Zn(2+) pocket. Residue His-415 participates in Zn(2+) binding.

It belongs to the histidinol dehydrogenase family. Zn(2+) is required as a cofactor.

The catalysed reaction is L-histidinol + 2 NAD(+) + H2O = L-histidine + 2 NADH + 3 H(+). Its pathway is amino-acid biosynthesis; L-histidine biosynthesis; L-histidine from 5-phospho-alpha-D-ribose 1-diphosphate: step 9/9. Its function is as follows. Catalyzes the sequential NAD-dependent oxidations of L-histidinol to L-histidinaldehyde and then to L-histidine. The polypeptide is Histidinol dehydrogenase (Listeria monocytogenes serotype 4b (strain F2365)).